The primary structure comprises 232 residues: Sugar fermentation stimulation protein homolog (232 aa).

It belongs to the SfsA family.

The polypeptide is Sugar fermentation stimulation protein homolog (Magnetococcus marinus (strain ATCC BAA-1437 / JCM 17883 / MC-1)).